Here is a 779-residue protein sequence, read N- to C-terminus: Ribonucleoside-diphosphate reductase large subunit (779 aa).

Residues Ser178, 193–194 (SC), Gly222, 420–424 (NLCIE), and 614–618 (PTATS) contribute to the substrate site. Residues Cys194 and Cys440 are joined by a disulfide bond. Asn420 serves as the catalytic Proton acceptor. Cys422 serves as the catalytic Cysteine radical intermediate. Glu424 serves as the catalytic Proton acceptor.

This sequence belongs to the ribonucleoside diphosphate reductase large chain family. As to quaternary structure, heterotetramer composed of a homodimer of the large subunit (R1) and a homodimer of the small subunit (R2). Larger multisubunit protein complex are also active, composed of (R1)n(R2)n.

It catalyses the reaction a 2'-deoxyribonucleoside 5'-diphosphate + [thioredoxin]-disulfide + H2O = a ribonucleoside 5'-diphosphate + [thioredoxin]-dithiol. Under complex allosteric control mediated by deoxynucleoside triphosphates and ATP binding. The type of nucleotide bound at the specificity site determines substrate preference. It seems probable that ATP makes the enzyme reduce CDP and UDP, dGTP favors ADP reduction and dTTP favors GDP reduction. In terms of biological role, ribonucleoside-diphosphate reductase holoenzyme provides the precursors necessary for viral DNA synthesis. Allows virus growth in non-dividing cells. Catalyzes the biosynthesis of deoxyribonucleotides from the corresponding ribonucleotides. The chain is Ribonucleoside-diphosphate reductase large subunit from African swine fever virus (isolate Tick/Malawi/Lil 20-1/1983) (ASFV).